Consider the following 544-residue polypeptide: Chaperonin GroEL 3 (544 aa).

ATP is bound by residues 30–33, Lys-51, 87–91, Gly-415, and Asp-496; these read TLGP and DGTTT.

The protein belongs to the chaperonin (HSP60) family. In terms of assembly, forms a cylinder of 14 subunits composed of two heptameric rings stacked back-to-back. Interacts with the co-chaperonin GroES.

It is found in the cytoplasm. It carries out the reaction ATP + H2O + a folded polypeptide = ADP + phosphate + an unfolded polypeptide.. In terms of biological role, together with its co-chaperonin GroES, plays an essential role in assisting protein folding. The GroEL-GroES system forms a nano-cage that allows encapsulation of the non-native substrate proteins and provides a physical environment optimized to promote and accelerate protein folding. The polypeptide is Chaperonin GroEL 3 (Rhizobium meliloti (strain 1021) (Ensifer meliloti)).